A 65-amino-acid polypeptide reads, in one-letter code: Large ribosomal subunit protein bL35 (65 aa).

The disordered stretch occupies residues 1–28; it reads MPKMKTNRSAAKRFGKTGSGKFTRRRQN.

It belongs to the bacterial ribosomal protein bL35 family.

The polypeptide is Large ribosomal subunit protein bL35 (Solidesulfovibrio magneticus (strain ATCC 700980 / DSM 13731 / RS-1) (Desulfovibrio magneticus)).